Here is a 182-residue protein sequence, read N- to C-terminus: Putative lipoprotein LpqE (182 aa).

The first 29 residues, 1 to 29 (MNRCNIRLRLAGMTTWVASIALLAAALSG), serve as a signal peptide directing secretion. A lipid anchor (N-palmitoyl cysteine) is attached at C30. C30 carries S-diacylglycerol cysteine lipidation.

The protein localises to the cell membrane. The protein is Putative lipoprotein LpqE (lpqE) of Mycobacterium bovis (strain ATCC BAA-935 / AF2122/97).